Here is a 372-residue protein sequence, read N- to C-terminus: uncharacterized protein (372 aa).

Residue 4–18 (YIIVGAGILGASTAY) participates in FAD binding.

Belongs to the DadA oxidoreductase family. The cofactor is FAD.

This is an uncharacterized protein from Bacillus subtilis (strain 168).